A 558-amino-acid polypeptide reads, in one-letter code: Oligo-1,6-glucosidase (558 aa).

Ca(2+)-binding residues include aspartate 21, asparagine 23, aspartate 25, and aspartate 29. Residue aspartate 199 is the Nucleophile of the active site. Glutamate 255 serves as the catalytic Proton donor.

The protein belongs to the glycosyl hydrolase 13 family.

The protein resides in the cytoplasm. It carries out the reaction Hydrolysis of (1-&gt;6)-alpha-D-glucosidic linkages in some oligosaccharides produced from starch and glycogen by alpha-amylase, and in isomaltose.. This is Oligo-1,6-glucosidase (malL) from Bacillus cereus.